A 726-amino-acid polypeptide reads, in one-letter code: Ribonuclease R (726 aa).

Positions Arg-264–Leu-592 constitute an RNB domain. The S1 motif domain maps to Gly-645–Val-726.

The protein belongs to the RNR ribonuclease family. RNase R subfamily.

Its subcellular location is the cytoplasm. It catalyses the reaction Exonucleolytic cleavage in the 3'- to 5'-direction to yield nucleoside 5'-phosphates.. Functionally, 3'-5' exoribonuclease that releases 5'-nucleoside monophosphates and is involved in maturation of structured RNAs. This Mycoplasma pneumoniae (strain ATCC 29342 / M129 / Subtype 1) (Mycoplasmoides pneumoniae) protein is Ribonuclease R.